The sequence spans 103 residues: Large ribosomal subunit protein P2 (103 aa).

The interval 64-103 (LAISSSQKSEPAQPADTAESTQATENKEEEDEDFDIFAAF) is disordered. The segment covering 90 to 103 (KEEEDEDFDIFAAF) has biased composition (acidic residues).

The protein belongs to the eukaryotic ribosomal protein P1/P2 family. Component of the large ribosomal subunit.

It is found in the cytoplasm. Its function is as follows. Plays an important role in the elongation step of protein synthesis. The protein is Large ribosomal subunit protein P2 (RPP2A) of Encephalitozoon cuniculi (strain GB-M1) (Microsporidian parasite).